The chain runs to 178 residues: Interleukin-10 (178 aa).

A signal peptide spans 1–18 (MHSSALLCCLVLLTGVRA). Cystine bridges form between Cys30-Cys126 and Cys80-Cys132. Residue Asn134 is glycosylated (N-linked (GlcNAc...) asparagine).

The protein belongs to the IL-10 family. In terms of assembly, homodimer. Interacts with IL10RA and IL10RB. Produced by a variety of cell lines, including T-cells, macrophages, mast cells and other cell types.

The protein localises to the secreted. Functionally, major immune regulatory cytokine that acts on many cells of the immune system where it has profound anti-inflammatory functions, limiting excessive tissue disruption caused by inflammation. Mechanistically, IL10 binds to its heterotetrameric receptor comprising IL10RA and IL10RB leading to JAK1 and STAT2-mediated phosphorylation of STAT3. In turn, STAT3 translocates to the nucleus where it drives expression of anti-inflammatory mediators. Targets antigen-presenting cells (APCs) such as macrophages and monocytes and inhibits their release of pro-inflammatory cytokines including granulocyte-macrophage colony-stimulating factor /GM-CSF, granulocyte colony-stimulating factor/G-CSF, IL-1 alpha, IL-1 beta, IL-6, IL-8 and TNF-alpha. Also interferes with antigen presentation by reducing the expression of MHC-class II and co-stimulatory molecules, thereby inhibiting their ability to induce T cell activation. In addition, controls the inflammatory response of macrophages by reprogramming essential metabolic pathways including mTOR signaling. The polypeptide is Interleukin-10 (IL10) (Homo sapiens (Human)).